The chain runs to 687 residues: uncharacterized protein (687 aa).

Over residues 277 to 295 (SVCSSQSFSSGQSDISMSS) the composition is skewed to low complexity. Disordered regions lie at residues 277–337 (SVCS…QDCD), 342–361 (DTES…SEMP), and 531–564 (HVEQ…PSLI). Residues 300-313 (NGSSVGNGSLSPMT) show a composition bias toward polar residues.

This is an uncharacterized protein from Caenorhabditis elegans.